The sequence spans 126 residues: Large ribosomal subunit protein uL24 (126 aa).

Residues 1 to 23 are disordered; the sequence is MKFSRDVTSSRRKQRKAHFGAPS.

Belongs to the universal ribosomal protein uL24 family. In terms of assembly, component of the large ribosomal subunit (LSU). Mature yeast ribosomes consist of a small (40S) and a large (60S) subunit. The 40S small subunit contains 1 molecule of ribosomal RNA (18S rRNA) and at least 33 different proteins. The large 60S subunit contains 3 rRNA molecules (25S, 5.8S and 5S rRNA) and at least 46 different proteins.

The protein resides in the cytoplasm. Its subcellular location is the nucleus. It is found in the nucleolus. Its function is as follows. Component of the ribosome, a large ribonucleoprotein complex responsible for the synthesis of proteins in the cell. The small ribosomal subunit (SSU) binds messenger RNAs (mRNAs) and translates the encoded message by selecting cognate aminoacyl-transfer RNA (tRNA) molecules. The large subunit (LSU) contains the ribosomal catalytic site termed the peptidyl transferase center (PTC), which catalyzes the formation of peptide bonds, thereby polymerizing the amino acids delivered by tRNAs into a polypeptide chain. The nascent polypeptides leave the ribosome through a tunnel in the LSU and interact with protein factors that function in enzymatic processing, targeting, and the membrane insertion of nascent chains at the exit of the ribosomal tunnel. The sequence is that of Large ribosomal subunit protein uL24 (rpl26) from Schizosaccharomyces pombe (strain 972 / ATCC 24843) (Fission yeast).